We begin with the raw amino-acid sequence, 478 residues long: GDP-fucose protein O-fucosyltransferase 3 (478 aa).

Over 1–8 the chain is Cytoplasmic; that stretch reads MVWIQRRR. A helical; Signal-anchor for type II membrane protein membrane pass occupies residues 9–31; sequence LLASCLCITATVFLLVTLQVVVE. The Lumenal portion of the chain corresponds to 32-478; sequence LGKFERKKFK…QEFWALVFKD (447 aa). N110 and N168 each carry an N-linked (GlcNAc...) asparagine glycan. C389 and C392 are oxidised to a cystine.

This sequence belongs to the glycosyltransferase 10 family.

The protein localises to the endoplasmic reticulum membrane. The enzyme catalyses L-threonyl-[protein] + GDP-beta-L-fucose = 3-O-(alpha-L-fucosyl)-L-threonyl-[protein] + GDP + H(+). It catalyses the reaction L-seryl-[protein] + GDP-beta-L-fucose = 3-O-(alpha-L-fucosyl)-L-seryl-[protein] + GDP + H(+). Its pathway is protein modification; protein glycosylation. Protein O-fucosyltransferase that specifically catalyzes O-fucosylation of serine or threonine residues in EMI domains of target proteins, such as MMRN1, MMRN2 and EMID1. Attaches fucose through an O-glycosidic linkage. O-fucosylation of EMI domain-containing proteins may be required for facilitating protein folding and secretion. May also show alpha-(1,3)-fucosyltransferase activity toward the innermost N-acetyl glucosamine (GlcNAc) residue in biantennary N-glycan acceptors. However, this was tested with a library of synthetic substrates and this activity is unsure in vivo. May be involved in biosynthesis of Lewis X-carrying biantennary N-glycans that regulate neuron stem cell self-renewal during brain development. In Canis lupus familiaris (Dog), this protein is GDP-fucose protein O-fucosyltransferase 3 (FUT10).